Here is a 167-residue protein sequence, read N- to C-terminus: Crossover junction endodeoxyribonuclease RuvC (167 aa).

Residues aspartate 7, glutamate 67, and aspartate 139 contribute to the active site. Mg(2+) contacts are provided by aspartate 7, glutamate 67, and aspartate 139.

This sequence belongs to the RuvC family. Homodimer which binds Holliday junction (HJ) DNA. The HJ becomes 2-fold symmetrical on binding to RuvC with unstacked arms; it has a different conformation from HJ DNA in complex with RuvA. In the full resolvosome a probable DNA-RuvA(4)-RuvB(12)-RuvC(2) complex forms which resolves the HJ. Mg(2+) is required as a cofactor.

The protein localises to the cytoplasm. It carries out the reaction Endonucleolytic cleavage at a junction such as a reciprocal single-stranded crossover between two homologous DNA duplexes (Holliday junction).. The RuvA-RuvB-RuvC complex processes Holliday junction (HJ) DNA during genetic recombination and DNA repair. Endonuclease that resolves HJ intermediates. Cleaves cruciform DNA by making single-stranded nicks across the HJ at symmetrical positions within the homologous arms, yielding a 5'-phosphate and a 3'-hydroxyl group; requires a central core of homology in the junction. The consensus cleavage sequence is 5'-(A/T)TT(C/G)-3'. Cleavage occurs on the 3'-side of the TT dinucleotide at the point of strand exchange. HJ branch migration catalyzed by RuvA-RuvB allows RuvC to scan DNA until it finds its consensus sequence, where it cleaves and resolves the cruciform DNA. The sequence is that of Crossover junction endodeoxyribonuclease RuvC from Zymomonas mobilis subsp. mobilis (strain ATCC 31821 / ZM4 / CP4).